The sequence spans 422 residues: 3-phosphoshikimate 1-carboxyvinyltransferase (422 aa).

Lys20, Ser21, and Arg25 together coordinate 3-phosphoshikimate. Residue Lys20 coordinates phosphoenolpyruvate. Residues Gly90 and Arg118 each contribute to the phosphoenolpyruvate site. 3-phosphoshikimate contacts are provided by Ser163, Ser164, Gln165, Ser191, Asp306, and Lys333. Position 165 (Gln165) interacts with phosphoenolpyruvate. The active-site Proton acceptor is the Asp306. 2 residues coordinate phosphoenolpyruvate: Arg337 and Arg378.

This sequence belongs to the EPSP synthase family. Monomer.

It localises to the cytoplasm. The catalysed reaction is 3-phosphoshikimate + phosphoenolpyruvate = 5-O-(1-carboxyvinyl)-3-phosphoshikimate + phosphate. It participates in metabolic intermediate biosynthesis; chorismate biosynthesis. Its function is as follows. Catalyzes the transfer of the enolpyruvyl moiety of phosphoenolpyruvate (PEP) to the 5-hydroxyl of shikimate-3-phosphate (S3P) to produce enolpyruvyl shikimate-3-phosphate and inorganic phosphate. The chain is 3-phosphoshikimate 1-carboxyvinyltransferase from Methanocella arvoryzae (strain DSM 22066 / NBRC 105507 / MRE50).